Consider the following 436-residue polypeptide: 3-ketoacyl-CoA thiolase (436 aa).

Cys-99 (acyl-thioester intermediate) is an active-site residue. Residues His-392 and Cys-422 each act as proton acceptor in the active site.

The protein belongs to the thiolase-like superfamily. Thiolase family. In terms of assembly, heterotetramer of two alpha chains (FadJ) and two beta chains (FadI).

It is found in the cytoplasm. The catalysed reaction is an acyl-CoA + acetyl-CoA = a 3-oxoacyl-CoA + CoA. Its pathway is lipid metabolism; fatty acid beta-oxidation. In terms of biological role, catalyzes the final step of fatty acid oxidation in which acetyl-CoA is released and the CoA ester of a fatty acid two carbons shorter is formed. The chain is 3-ketoacyl-CoA thiolase from Escherichia coli O127:H6 (strain E2348/69 / EPEC).